A 159-amino-acid polypeptide reads, in one-letter code: UPF0178 protein AZC_4000 (159 aa).

This sequence belongs to the UPF0178 family.

This Azorhizobium caulinodans (strain ATCC 43989 / DSM 5975 / JCM 20966 / LMG 6465 / NBRC 14845 / NCIMB 13405 / ORS 571) protein is UPF0178 protein AZC_4000.